Reading from the N-terminus, the 397-residue chain is Argininosuccinate synthase (397 aa).

ATP-binding positions include 9-17 (AFSGGLDTS) and Ala35. L-citrulline contacts are provided by Tyr88 and Ser93. Gly117 provides a ligand contact to ATP. L-aspartate is bound by residues Thr119, Asn123, and Asp124. Asn123 contacts L-citrulline. Residue Arg127 participates in L-citrulline binding.

The protein belongs to the argininosuccinate synthase family. Type 1 subfamily. In terms of assembly, homotetramer.

It is found in the cytoplasm. It catalyses the reaction L-citrulline + L-aspartate + ATP = 2-(N(omega)-L-arginino)succinate + AMP + diphosphate + H(+). Its pathway is amino-acid biosynthesis; L-arginine biosynthesis; L-arginine from L-ornithine and carbamoyl phosphate: step 2/3. In Xanthomonas campestris pv. campestris (strain ATCC 33913 / DSM 3586 / NCPPB 528 / LMG 568 / P 25), this protein is Argininosuccinate synthase.